The sequence spans 65 residues: Large ribosomal subunit protein bL35 (65 aa).

Belongs to the bacterial ribosomal protein bL35 family.

The polypeptide is Large ribosomal subunit protein bL35 (Thiobacillus denitrificans (strain ATCC 25259 / T1)).